Here is a 517-residue protein sequence, read N- to C-terminus: C-22 sterol desaturase ERG5 (517 aa).

The helical transmembrane segment at 21–41 (LAVAKATGSPITTLFTIIFLI) threads the bilayer. A heme-binding site is contributed by Cys-458.

It belongs to the cytochrome P450 family. It depends on heme as a cofactor.

The protein resides in the endoplasmic reticulum membrane. The catalysed reaction is 5-dehydroepisterol + NADPH + O2 + H(+) = ergosta-5,7,22,24(28)-tetraen-3beta-ol + NADP(+) + 2 H2O. It participates in steroid metabolism; ergosterol biosynthesis; ergosterol from zymosterol: step 4/5. Its function is as follows. C-22 sterol desaturase; part of the third module of ergosterol biosynthesis pathway that includes the late steps of the pathway. ERG5 converts 5-dehydroepisterol into ergosta-5,7,22,24(28)-tetraen-3beta-ol by forming the C-22(23) double bond in the sterol side chain. The third module or late pathway involves the ergosterol synthesis itself through consecutive reactions that mainly occur in the endoplasmic reticulum (ER) membrane. Firstly, the squalene synthase ERG9 catalyzes the condensation of 2 farnesyl pyrophosphate moieties to form squalene, which is the precursor of all steroids. Squalene synthase is crucial for balancing the incorporation of farnesyl diphosphate (FPP) into sterol and nonsterol isoprene synthesis. Secondly, the squalene epoxidase ERG1 catalyzes the stereospecific oxidation of squalene to (S)-2,3-epoxysqualene, which is considered to be a rate-limiting enzyme in steroid biosynthesis. Then, the lanosterol synthase ERG7 catalyzes the cyclization of (S)-2,3 oxidosqualene to lanosterol, a reaction that forms the sterol core. In the next steps, lanosterol is transformed to zymosterol through a complex process involving various demethylation, reduction and desaturation reactions. The lanosterol 14-alpha-demethylase ERG11 (also known as CYP51) catalyzes C14-demethylation of lanosterol to produce 4,4'-dimethyl cholesta-8,14,24-triene-3-beta-ol, which is critical for ergosterol biosynthesis. The C-14 reductase ERG24 reduces the C14=C15 double bond of 4,4-dimethyl-cholesta-8,14,24-trienol to produce 4,4-dimethyl-cholesta-8,24-dienol. 4,4-dimethyl-cholesta-8,24-dienol is substrate of the C-4 demethylation complex ERG25-ERG26-ERG27 in which ERG25 catalyzes the three-step monooxygenation required for the demethylation of 4,4-dimethyl and 4alpha-methylsterols, ERG26 catalyzes the oxidative decarboxylation that results in a reduction of the 3-beta-hydroxy group at the C-3 carbon to an oxo group, and ERG27 is responsible for the reduction of the keto group on the C-3. ERG28 has a role as a scaffold to help anchor ERG25, ERG26 and ERG27 to the endoplasmic reticulum and ERG29 regulates the activity of the iron-containing C4-methylsterol oxidase ERG25. Then, the sterol 24-C-methyltransferase ERG6 catalyzes the methyl transfer from S-adenosyl-methionine to the C-24 of zymosterol to form fecosterol. The C-8 sterol isomerase ERG2 catalyzes the reaction which results in unsaturation at C-7 in the B ring of sterols and thus converts fecosterol to episterol. The sterol-C5-desaturase ERG3 then catalyzes the introduction of a C-5 double bond in the B ring to produce 5-dehydroepisterol. The C-22 sterol desaturase ERG5 further converts 5-dehydroepisterol into ergosta-5,7,22,24(28)-tetraen-3beta-ol by forming the C-22(23) double bond in the sterol side chain. Finally, ergosta-5,7,22,24(28)-tetraen-3beta-ol is substrate of the C-24(28) sterol reductase ERG4 to produce ergosterol. The polypeptide is C-22 sterol desaturase ERG5 (Candida albicans (strain SC5314 / ATCC MYA-2876) (Yeast)).